The following is a 61-amino-acid chain: Large ribosomal subunit protein eL37 (61 aa).

Residues Cys19, Cys22, Cys34, and Cys37 each coordinate Zn(2+). Residues 19-37 form a C4-type zinc finger; that stretch reads CRRCGRNAYNVSKHYCAAC.

Belongs to the eukaryotic ribosomal protein eL37 family. Zn(2+) serves as cofactor.

Functionally, binds to the 23S rRNA. The protein is Large ribosomal subunit protein eL37 of Saccharolobus islandicus (strain L.S.2.15 / Lassen #1) (Sulfolobus islandicus).